The chain runs to 427 residues: MNKLIISLLIVLSAISIISADYQYGYCKFGSVGTVNQNITGYVTLTAQDGALNLVYNISSINLPTGSYATAIMTYGYNPSNNTDLGGVFQVDGKGTEQCQSGGSRAGDLYNLYVNDNRISSNFDSLTSVSIVDSPNSIIGRSIAIFQESYSCDLLKSSVGTSVGPLTTVVASCIIGIGNSANVPATNGVNTTTGNANTAGAYSSLSNTQYDAMVLLANTTKSPSAAIGGSVLFRSSSNSVSVNGIVSGVAKSVHGFHIHAFGDLTTVDGASIGGHWLSGAQVHAFPENTSRHFGDLGNLCIFDNDFKNAYYYLSTSYFSFSGLVGRGFAVHAARDDGNTYVGGDRVAQGVVALIPKAATTLNQVPSNWKYEVICSNGTYTGESTIEPSPTPSTTPTPTETSQPGTSSYLAPFFVLILSSLISVILIL.

Residues 1–20 (MNKLIISLLIVLSAISIISA) form the signal peptide. The Extracellular portion of the chain corresponds to 21 to 406 (DYQYGYCKFG…PTETSQPGTS (386 aa)). N-linked (GlcNAc...) asparagine glycans are attached at residues asparagine 38, asparagine 57, asparagine 81, asparagine 190, and asparagine 218. The Cu cation site is built by histidine 257, histidine 259, and histidine 275. Residues histidine 275 and histidine 283 each contribute to the Zn(2+) site. The N-linked (GlcNAc...) asparagine glycan is linked to asparagine 288. Residues histidine 292 and aspartate 295 each contribute to the Zn(2+) site. Histidine 331 is a Cu cation binding site. A glycan (N-linked (GlcNAc...) asparagine) is linked at asparagine 376. Positions 381-404 (GESTIEPSPTPSTTPTPTETSQPG) are disordered. Residues 395–404 (PTPTETSQPG) show a composition bias toward low complexity. A helical transmembrane segment spans residues 407–426 (SYLAPFFVLILSSLISVILI). Leucine 427 is a topological domain (cytoplasmic).

This sequence belongs to the Cu-Zn superoxide dismutase family. Requires Cu cation as cofactor. Zn(2+) serves as cofactor.

It localises to the cell membrane. The catalysed reaction is 2 superoxide + 2 H(+) = H2O2 + O2. In terms of biological role, protect the extracellular space from toxic effect of reactive oxygen intermediates by converting superoxyde radicals into hydrogen peroxyde and oxygen. This Dictyostelium discoideum (Social amoeba) protein is Extracellular superoxide dismutase [Cu-Zn] 2 (sodB).